The following is a 36-amino-acid chain: Conotoxin Cl14.10 (36 aa).

A propeptide spanning residues 1–2 (NE) is cleaved from the precursor.

In terms of processing, contains 2 disulfide bond. As to expression, expressed by the venom duct.

It localises to the secreted. This is Conotoxin Cl14.10 from Californiconus californicus (California cone).